The primary structure comprises 189 residues: Elongation factor P (189 aa).

Lys34 bears the N6-(3,6-diaminohexanoyl)-5-hydroxylysine mark.

This sequence belongs to the elongation factor P family. May be beta-lysylated on the epsilon-amino group of Lys-34 by the combined action of EpmA and EpmB, and then hydroxylated on the C5 position of the same residue by EpmC (if this protein is present). Lysylation is critical for the stimulatory effect of EF-P on peptide-bond formation. The lysylation moiety may extend toward the peptidyltransferase center and stabilize the terminal 3-CCA end of the tRNA. Hydroxylation of the C5 position on Lys-34 may allow additional potential stabilizing hydrogen-bond interactions with the P-tRNA.

It is found in the cytoplasm. Its pathway is protein biosynthesis; polypeptide chain elongation. Involved in peptide bond synthesis. Alleviates ribosome stalling that occurs when 3 or more consecutive Pro residues or the sequence PPG is present in a protein, possibly by augmenting the peptidyl transferase activity of the ribosome. Modification of Lys-34 is required for alleviation. This chain is Elongation factor P, found in Francisella tularensis subsp. novicida (strain U112).